Consider the following 475-residue polypeptide: Ribulose bisphosphate carboxylase large chain (475 aa).

The propeptide occupies 1-2 (MS). Pro3 carries the post-translational modification N-acetylproline. Lys14 carries the N6,N6,N6-trimethyllysine modification. Substrate-binding residues include Asn123 and Thr173. Lys175 (proton acceptor) is an active-site residue. Lys177 lines the substrate pocket. Positions 201, 203, and 204 each coordinate Mg(2+). Lys201 carries the post-translational modification N6-carboxylysine. Residue His294 is the Proton acceptor of the active site. Substrate contacts are provided by Arg295, His327, and Ser379.

It belongs to the RuBisCO large chain family. Type I subfamily. In terms of assembly, heterohexadecamer of 8 large chains and 8 small chains. It depends on Mg(2+) as a cofactor.

Its subcellular location is the plastid. It localises to the chloroplast. The catalysed reaction is 2 (2R)-3-phosphoglycerate + 2 H(+) = D-ribulose 1,5-bisphosphate + CO2 + H2O. The enzyme catalyses D-ribulose 1,5-bisphosphate + O2 = 2-phosphoglycolate + (2R)-3-phosphoglycerate + 2 H(+). Functionally, ruBisCO catalyzes two reactions: the carboxylation of D-ribulose 1,5-bisphosphate, the primary event in carbon dioxide fixation, as well as the oxidative fragmentation of the pentose substrate in the photorespiration process. Both reactions occur simultaneously and in competition at the same active site. This is Ribulose bisphosphate carboxylase large chain from Huperzia lucidula (Shining clubmoss).